The following is a 164-amino-acid chain: Photosystem II extrinsic protein V (164 aa).

The first 27 residues, 1-27 (MIPNRKIQLSLFAVIIVFETLLNQVYA), serve as a signal peptide directing secretion. The heme c site is built by Cys64, Cys67, His68, and Met131.

The protein belongs to the cytochrome c family. PsbV subfamily. As to quaternary structure, PSII is composed of 1 copy each of membrane proteins PsbA, PsbB, PsbC, PsbD, PsbE, PsbF, PsbH, PsbI, PsbJ, PsbK, PsbL, PsbM, PsbT, PsbY, PsbZ, Psb30/Ycf12, at least 3 peripheral proteins of the oxygen-evolving complex and a large number of cofactors. It forms dimeric complexes. The extrinsic subunits in red algae are PsbO (OEC33), PsbQ', cytochrome c-550 and PsbU. Requires heme c as cofactor.

Its subcellular location is the plastid. It localises to the chloroplast thylakoid membrane. Its function is as follows. One of the extrinsic, lumenal subunits of photosystem II (PSII). PSII is a light-driven water plastoquinone oxidoreductase, using light energy to abstract electrons from H(2)O, generating a proton gradient subsequently used for ATP formation. The extrinsic proteins stabilize the structure of photosystem II oxygen-evolving complex (OEC), the ion environment of oxygen evolution and protect the OEC against heat-induced inactivation. This is Photosystem II extrinsic protein V from Gracilaria tenuistipitata var. liui (Red alga).